Here is a 433-residue protein sequence, read N- to C-terminus: NADH-quinone oxidoreductase subunit D (433 aa).

It belongs to the complex I 49 kDa subunit family. In terms of assembly, NDH-1 is composed of 14 different subunits. Subunits NuoB, C, D, E, F, and G constitute the peripheral sector of the complex.

It is found in the cell membrane. The enzyme catalyses a quinone + NADH + 5 H(+)(in) = a quinol + NAD(+) + 4 H(+)(out). Functionally, NDH-1 shuttles electrons from NADH, via FMN and iron-sulfur (Fe-S) centers, to quinones in the respiratory chain. The immediate electron acceptor for the enzyme in this species is believed to be a menaquinone. Couples the redox reaction to proton translocation (for every two electrons transferred, four hydrogen ions are translocated across the cytoplasmic membrane), and thus conserves the redox energy in a proton gradient. The chain is NADH-quinone oxidoreductase subunit D from Cutibacterium acnes (strain DSM 16379 / KPA171202) (Propionibacterium acnes).